The following is a 550-amino-acid chain: MTPADLAELLRNTAAAVLAERGLDAAALPATVVVERPRNPEHGDYASNLALQLGKKVGANPRELAGWLAAALAETDGIASAEVAGPGFINLRLEASAQAVVVTNVLDAGDRYGHSDAQSTHNINLEFVSANPTGPIHIGGTRWAAVGDALGRLLSTQGAGVVREYYFNDHGAQIDRFASSLIAAAKGEPTPEDGYAGSYINDIAAQVLRQAPDALSLPEPQLRETFRAIGVDLMFTHIKESLHEFGTDFDVYTHEDSMHTSGRVDQAIARLRETGNIYEKDGATWLRTSAFGDDKDRVVIKSDGKPAYIAGDIAYYLDKRQRGFDLCIYMLGADHHGYIARLKAVAAAFGDDPATVEVLIGQMVNLVRDGQPVRMSKRAGTVITLDDLVEAIGVDAARYSLIRSSVDTPIDIDLALWSSASNENPVYYVQYAHARLSALARNAAELGLIPDTAHLELLSHDKEGTLLRTLGEFPRVLKTAASLREPHRVCRYLEDLAGDYHRFYDSCRVLPQGDEQPTDLHTARLALCQATRQVIANGLAILGVTAPERM.

Residues 130–140 (ANPTGPIHIGG) carry the 'HIGH' region motif.

The protein belongs to the class-I aminoacyl-tRNA synthetase family. In terms of assembly, monomer.

It localises to the cytoplasm. It carries out the reaction tRNA(Arg) + L-arginine + ATP = L-arginyl-tRNA(Arg) + AMP + diphosphate. In Mycolicibacterium paratuberculosis (strain ATCC BAA-968 / K-10) (Mycobacterium paratuberculosis), this protein is Arginine--tRNA ligase.